The sequence spans 430 residues: Adenylosuccinate synthetase (430 aa).

GTP is bound by residues 12 to 18 and 40 to 42; these read GDEGKGK and GHT. The active-site Proton acceptor is the Asp-13. Residues Asp-13 and Gly-40 each contribute to the Mg(2+) site. IMP is bound by residues 13–16, 38–41, Thr-128, Arg-142, Gln-223, Thr-238, and Arg-302; these read DEGK and NAGH. The Proton donor role is filled by His-41. 298–304 is a substrate binding site; the sequence is TVTKRPR. Residues Arg-304, 330 to 332, and 412 to 414 contribute to the GTP site; these read CVD and SVG.

This sequence belongs to the adenylosuccinate synthetase family. As to quaternary structure, homodimer. Mg(2+) serves as cofactor.

It localises to the cytoplasm. The catalysed reaction is IMP + L-aspartate + GTP = N(6)-(1,2-dicarboxyethyl)-AMP + GDP + phosphate + 2 H(+). Its pathway is purine metabolism; AMP biosynthesis via de novo pathway; AMP from IMP: step 1/2. In terms of biological role, plays an important role in the de novo pathway of purine nucleotide biosynthesis. Catalyzes the first committed step in the biosynthesis of AMP from IMP. The protein is Adenylosuccinate synthetase of Ligilactobacillus salivarius (strain UCC118) (Lactobacillus salivarius).